The primary structure comprises 426 residues: Glutamate-1-semialdehyde 2,1-aminomutase (426 aa).

At Lys-265 the chain carries N6-(pyridoxal phosphate)lysine.

It belongs to the class-III pyridoxal-phosphate-dependent aminotransferase family. HemL subfamily. As to quaternary structure, homodimer. It depends on pyridoxal 5'-phosphate as a cofactor.

The protein localises to the cytoplasm. The enzyme catalyses (S)-4-amino-5-oxopentanoate = 5-aminolevulinate. It participates in porphyrin-containing compound metabolism; protoporphyrin-IX biosynthesis; 5-aminolevulinate from L-glutamyl-tRNA(Glu): step 2/2. The chain is Glutamate-1-semialdehyde 2,1-aminomutase from Yersinia enterocolitica serotype O:8 / biotype 1B (strain NCTC 13174 / 8081).